We begin with the raw amino-acid sequence, 797 residues long: Interphotoreceptor matrix proteoglycan 1 (797 aa).

The N-terminal stretch at 1–20 (MYLETRRAIFVFWIFLQVQG) is a signal peptide. N-linked (GlcNAc...) asparagine glycans are attached at residues Asn42, Asn143, Asn191, and Asn215. The 123-residue stretch at 232–354 (EEQRVELSVS…QPEIYLTATD (123 aa)) folds into the SEA 1 domain. O-linked (GalNAc...) threonine glycans are attached at residues Thr403, Thr421, Thr432, and Thr442. In terms of domain architecture, SEA 2 spans 571–684 (RELVVFFSLR…YSLNIEPADQ (114 aa)). N-linked (GlcNAc...) asparagine glycosylation is found at Asn592 and Asn616. The Heparin- and hyaluronan-binding signature appears at 621-629 (KQLEILNFR). Asn630 and Asn648 each carry an N-linked (GlcNAc...) asparagine glycan.

In terms of processing, the N-terminus is blocked. Highly glycosylated (N- and O-linked carbohydrates and sialic acid). Expressed in the retina (at protein level). In the retina, specifically expressed by cone and rod photoreceptor cells. Localizes to cone and rod photoreceptor cells surrounding the interphotoreceptor matrix of the retina.

It localises to the cell projection. The protein resides in the cilium. Its subcellular location is the photoreceptor outer segment. The protein localises to the secreted. It is found in the extracellular space. It localises to the extracellular matrix. The protein resides in the interphotoreceptor matrix. Its subcellular location is the photoreceptor inner segment. Chondroitin sulfate-, heparin- and hyaluronan-binding protein. May serve to form a basic macromolecular scaffold comprising the insoluble interphotoreceptor matrix. This is Interphotoreceptor matrix proteoglycan 1 from Homo sapiens (Human).